A 637-amino-acid polypeptide reads, in one-letter code: Chaperone protein HtpG (637 aa).

The tract at residues 1–345 is a; substrate-binding; it reads MSQQETHGFQ…SNDLPLNVSR (345 aa). Positions 346 to 562 are b; sequence EILQDNHVTK…DGEMSTQMIK (217 aa). The c stretch occupies residues 563–637; sequence LMQAAGQPVP…MNQMLLANMK (75 aa).

The protein belongs to the heat shock protein 90 family. As to quaternary structure, homodimer.

It is found in the cytoplasm. Functionally, molecular chaperone. Has ATPase activity. This Shewanella baltica (strain OS155 / ATCC BAA-1091) protein is Chaperone protein HtpG.